The primary structure comprises 881 residues: Receptor-like protein 41 (881 aa).

An N-terminal signal peptide occupies residues 1-21; that stretch reads MSELLLRLNFLLLLLLSCVSP. The Extracellular portion of the chain corresponds to 22–844; sequence SSFVTFNNPV…EEQEQVLNWE (823 aa). N-linked (GlcNAc...) asparagine glycosylation is found at N58, N70, N91, N109, and N145. LRR repeat units lie at residues 97–121, 122–145, 146–169, 170–195, 197–219, 220–244, 245–267, 268–291, 293–317, 319–340, 342–364, 365–390, 391–412, 413–437, 439–462, and 463–486; these read FHELRSLLLIHNNFTSSSISSKFGM, LNKLEVLFLSSSGFLGQVPFSFSN, LSMLSALDLSDNELTGSLSFVRNL, RKLRVLDVSYNHFSGILNPNSSLFEL, HLTYLSLGSNSFTSSTLPYEFGN, LNKLELLDVSSNSFFGQVPPTISNL, TQLTELYLPLNDFTGSLPLVQNL, TKLSILALFGNHFSGTIPSSLFTM, FLSYLSLKGNNLNGSIEVPNSSSSS, LESLYLGKNHFEGKILKPISKL, NLKELDLSFLSTSYPIDLSLFSS, FKSLLVLDLTGDWISQAGLSSDSYIS, LTLEALYMKQCNISDFPNILKS, LPNLECIDVSNNRVSGKIPEWLWSL, RLSSVFIGDNLLTGFEGSSEILVN, and SSVQILVLDSNSLEGALPHLPLSI. N-linked (GlcNAc...) asparagine glycosylation is present at N189. 2 N-linked (GlcNAc...) asparagine glycosylation sites follow: N243 and N266. 2 N-linked (GlcNAc...) asparagine glycosylation sites follow: N305 and N312. Residue N402 is glycosylated (N-linked (GlcNAc...) asparagine). N462 carries an N-linked (GlcNAc...) asparagine glycan. The stretch at 487–506 is one LRR 17; degenerate repeat; sequence IYFSARYNRFKGDIPLSICN. N-linked (GlcNAc...) asparagine glycans are attached at residues N506 and N519. LRR repeat units follow at residues 507–528, 529–552, 554–576, 578–599, 600–624, 627–651, 701–724, 725–748, 749–772, and 774–797; these read RSSLDVLDLRYNNFTGPIPPCL, SNLLFLNLRKNNLEGSIPDTYFAD, PLRSLDVGYNRLTGKLPRSLLNC, ALQFLSVDHNGIEDTFPFYLKV, LPKLQVLLLSSNKFYGPLSPPNQGS, FPELRILEIAGNKLTGSLPQDFFVN, TSSATIDLSGNRLEGEIPESIGLL, KALIALNLSNNAFTGHIPLSLANL, VKIESLDLSSNQLSGTIPNGLGTL, and FLAYVNVSHNQLNGEIPQGTQITG. N575 is a glycosylation site (N-linked (GlcNAc...) asparagine). N-linked (GlcNAc...) asparagine glycosylation occurs at N731. N779 carries N-linked (GlcNAc...) asparagine glycosylation. Residues 845–865 traverse the membrane as a helical segment; the sequence is GVAIGYGVGVLLGLAIAQLIA. Over 866–881 the chain is Cytoplasmic; sequence SYKPEWLACLIKSRNR.

It belongs to the RLP family.

Its subcellular location is the cell membrane. May be involved in ABA-induced senescence responses. The protein is Receptor-like protein 41 of Arabidopsis thaliana (Mouse-ear cress).